We begin with the raw amino-acid sequence, 765 residues long: Palmitoyltransferase ZDHHC8 (765 aa).

Residues 1–13 (MPRSPGTRLKPAK) lie on the Cytoplasmic side of the membrane. The chain crosses the membrane as a helical span at residues 14–34 (YIPVATAAALLVGSSTLFFVF). Over 35 to 52 (TCPWLTRAVSPAVPVYNG) the chain is Lumenal. A helical transmembrane segment spans residues 53–73 (IIFLFVLANFSMATFMDPGVF). Residues 74–148 (PRADEDEDKE…NCIGRRNYRY (75 aa)) lie on the Cytoplasmic side of the membrane. The DHHC domain maps to 104-154 (KWCATCHFYRPPRCSHCSVCDNCVEDFDHHCPWVNNCIGRRNYRYFFLFLL). Residue Cys-134 is the S-palmitoyl cysteine intermediate of the active site. The helical transmembrane segment at 149–169 (FFLFLLSLSAHMVGVVAFGLV) threads the bilayer. Over 170-190 (YVLNHAEGLGAAHTTITMAVM) the chain is Lumenal. Residues 191-211 (CVAGLFFIPVIGLTGFHVVLV) form a helical membrane-spanning segment. Over 212 to 765 (TRGRTTNEHV…VGGTTYEISV (554 aa)) the chain is Cytoplasmic. Positions 290–386 (LKAGLGRSKS…PGPDSLTLGE (97 aa)) are disordered. Over residues 301–311 (GSLDRLDEKPL) the composition is skewed to basic and acidic residues. The segment covering 333–348 (PRPSSAESALSAQRTS) has biased composition (polar residues). Ser-337 is subject to Phosphoserine. Arg-441 bears the Omega-N-methylarginine mark. Residues 447 to 542 (ALQPLRSEGG…PREPSPVRYD (96 aa)) form a disordered region. Phosphoserine occurs at positions 606 and 627. The segment at 630–747 (SLSSAVSRAP…PGPSASPARH (118 aa)) is disordered. Positions 639–655 (PRTSSSSLQADLANNNA) are enriched in polar residues. Residues 671-680 (QGPPSPPSTP) are compositionally biased toward pro residues. Ser-675, Ser-682, Ser-725, and Ser-743 each carry phosphoserine.

The protein belongs to the DHHC palmitoyltransferase family. ERF2/ZDHHC9 subfamily.

The protein localises to the golgi apparatus membrane. The protein resides in the mitochondrion membrane. It carries out the reaction L-cysteinyl-[protein] + hexadecanoyl-CoA = S-hexadecanoyl-L-cysteinyl-[protein] + CoA. Functionally, palmitoyltransferase that catalyzes the addition of palmitate onto various protein substrates and therefore functions in several unrelated biological processes. Through the palmitoylation of ABCA1 regulates the localization of the transporter to the plasma membrane and thereby regulates its function in cholesterol and phospholipid efflux. Could also pamitoylate the D(2) dopamine receptor DRD2 and regulate its stability and localization to the plasma membrane. Could also play a role in glutamatergic transmission. The chain is Palmitoyltransferase ZDHHC8 from Canis lupus familiaris (Dog).